We begin with the raw amino-acid sequence, 312 residues long: Olfactory receptor 4K17 (312 aa).

The Extracellular segment spans residues 1–25 (MKLLNQSQVSEFILLGLTSSQDVEF). N5 carries an N-linked (GlcNAc...) asparagine glycan. A helical transmembrane segment spans residues 26–49 (LLFALFSVIYVVTVLGNLLIIVTV). At 50-57 (FNTPNLNT) the chain is on the cytoplasmic side. The helical transmembrane segment at 58-79 (PMYFLLGNLSFVDMTLASFATP) threads the bilayer. Over 80–100 (KVILNLLKKQKVISFAGCFTQ) the chain is Extracellular. A disulfide bridge connects residues C97 and C189. Residues 101-120 (IFLLHLLGGVEMVLLVSMAF) form a helical membrane-spanning segment. At 121-139 (DRYVAICKPLHYMTIMNKK) the chain is on the cytoplasmic side. The helical transmembrane segment at 140–158 (VCVLLVVTSWLLGLLHSGF) threads the bilayer. The Extracellular portion of the chain corresponds to 159–195 (QIPFAVNLPFCGPNVVDSIFCDLPLVTKLACIDIYFV). Residues 196–219 (QVVIVANSGIISLSCFIILLISYS) traverse the membrane as a helical segment. Over 220-235 (LILITIKNHSPTGQSK) the chain is Cytoplasmic. A helical transmembrane segment spans residues 236–258 (ARSTLTAHITVVILFFGPCIFIY). The Extracellular segment spans residues 259 to 269 (IWPFGNHSVDK). An N-linked (GlcNAc...) asparagine glycan is attached at N264. A helical membrane pass occupies residues 270 to 289 (FLAVFYTIITPILNPIIYTL). Residues 290-312 (RNKEMKISMKKLWRAFVNSREDT) lie on the Cytoplasmic side of the membrane.

This sequence belongs to the G-protein coupled receptor 1 family.

Its subcellular location is the cell membrane. Its function is as follows. Odorant receptor. The polypeptide is Olfactory receptor 4K17 (OR4K17) (Homo sapiens (Human)).